A 206-amino-acid chain; its full sequence is Holliday junction branch migration complex subunit RuvA (206 aa).

A domain I region spans residues 1 to 64; sequence MIGRLHGIII…EDAQLLYGFN (64 aa). Residues 65-143 form a domain II region; the sequence is TRQERTLFRE…GWISHDLFTP (79 aa). Residues 144-157 are flexible linker; the sequence is YTDAAPVDHEPSLA. A domain III region spans residues 158–206; sequence PADTVESEAVAALLALGYKPQQASLVVSKVIKPEMTVENVIREALRSML.

It belongs to the RuvA family. As to quaternary structure, homotetramer. Forms an RuvA(8)-RuvB(12)-Holliday junction (HJ) complex. HJ DNA is sandwiched between 2 RuvA tetramers; dsDNA enters through RuvA and exits via RuvB. An RuvB hexamer assembles on each DNA strand where it exits the tetramer. Each RuvB hexamer is contacted by two RuvA subunits (via domain III) on 2 adjacent RuvB subunits; this complex drives branch migration. In the full resolvosome a probable DNA-RuvA(4)-RuvB(12)-RuvC(2) complex forms which resolves the HJ.

The protein localises to the cytoplasm. The RuvA-RuvB-RuvC complex processes Holliday junction (HJ) DNA during genetic recombination and DNA repair, while the RuvA-RuvB complex plays an important role in the rescue of blocked DNA replication forks via replication fork reversal (RFR). RuvA specifically binds to HJ cruciform DNA, conferring on it an open structure. The RuvB hexamer acts as an ATP-dependent pump, pulling dsDNA into and through the RuvAB complex. HJ branch migration allows RuvC to scan DNA until it finds its consensus sequence, where it cleaves and resolves the cruciform DNA. In Tolumonas auensis (strain DSM 9187 / NBRC 110442 / TA 4), this protein is Holliday junction branch migration complex subunit RuvA.